The sequence spans 502 residues: Glycerol kinase (502 aa).

Residue threonine 14 coordinates ADP. Positions 14, 15, and 16 each coordinate ATP. Residue threonine 14 participates in sn-glycerol 3-phosphate binding. Residue arginine 18 participates in ADP binding. Sn-glycerol 3-phosphate is bound by residues arginine 84, glutamate 85, and tyrosine 136. Glycerol contacts are provided by arginine 84, glutamate 85, and tyrosine 136. Position 232 is a phosphohistidine; by HPr (histidine 232). Aspartate 246 contributes to the sn-glycerol 3-phosphate binding site. Residues aspartate 246 and glutamine 247 each contribute to the glycerol site. The ADP site is built by threonine 268 and glycine 311. Residues threonine 268, glycine 311, glutamine 315, and glycine 412 each contribute to the ATP site. Residues glycine 412 and asparagine 416 each coordinate ADP.

The protein belongs to the FGGY kinase family. As to quaternary structure, homotetramer and homodimer (in equilibrium). The phosphoenolpyruvate-dependent sugar phosphotransferase system (PTS), including enzyme I, and histidine-containing protein (HPr) are required for the phosphorylation, which leads to the activation of the enzyme.

The catalysed reaction is glycerol + ATP = sn-glycerol 3-phosphate + ADP + H(+). The protein operates within polyol metabolism; glycerol degradation via glycerol kinase pathway; sn-glycerol 3-phosphate from glycerol: step 1/1. Its activity is regulated as follows. Activated by phosphorylation and inhibited by fructose 1,6-bisphosphate (FBP). In terms of biological role, key enzyme in the regulation of glycerol uptake and metabolism. Catalyzes the phosphorylation of glycerol to yield sn-glycerol 3-phosphate. This chain is Glycerol kinase, found in Streptococcus pneumoniae (strain ATCC 700669 / Spain 23F-1).